The following is a 272-amino-acid chain: 2,3,4,5-tetrahydropyridine-2,6-dicarboxylate N-succinyltransferase (272 aa).

Positions 104 and 141 each coordinate substrate.

This sequence belongs to the transferase hexapeptide repeat family. As to quaternary structure, homotrimer.

The protein localises to the cytoplasm. It carries out the reaction (S)-2,3,4,5-tetrahydrodipicolinate + succinyl-CoA + H2O = (S)-2-succinylamino-6-oxoheptanedioate + CoA. The protein operates within amino-acid biosynthesis; L-lysine biosynthesis via DAP pathway; LL-2,6-diaminopimelate from (S)-tetrahydrodipicolinate (succinylase route): step 1/3. The chain is 2,3,4,5-tetrahydropyridine-2,6-dicarboxylate N-succinyltransferase from Dechloromonas aromatica (strain RCB).